The following is a 463-amino-acid chain: Glutamate--tRNA ligase 2 (463 aa).

The 'HIGH' region signature appears at 11–21 (PSPTGYLHIGG). The short motif at 240-244 (KLSKR) is the 'KMSKS' region element. Lys-243 contributes to the ATP binding site.

Belongs to the class-I aminoacyl-tRNA synthetase family. Glutamate--tRNA ligase type 1 subfamily. Monomer.

It is found in the cytoplasm. It catalyses the reaction tRNA(Glu) + L-glutamate + ATP = L-glutamyl-tRNA(Glu) + AMP + diphosphate. Catalyzes the attachment of glutamate to tRNA(Glu) in a two-step reaction: glutamate is first activated by ATP to form Glu-AMP and then transferred to the acceptor end of tRNA(Glu). The sequence is that of Glutamate--tRNA ligase 2 from Campylobacter jejuni subsp. jejuni serotype O:2 (strain ATCC 700819 / NCTC 11168).